We begin with the raw amino-acid sequence, 132 residues long: Small ribosomal subunit protein uS8 (132 aa).

It belongs to the universal ribosomal protein uS8 family. In terms of assembly, part of the 30S ribosomal subunit. Contacts proteins S5 and S12.

Its function is as follows. One of the primary rRNA binding proteins, it binds directly to 16S rRNA central domain where it helps coordinate assembly of the platform of the 30S subunit. This Mycolicibacterium gilvum (strain PYR-GCK) (Mycobacterium gilvum (strain PYR-GCK)) protein is Small ribosomal subunit protein uS8.